We begin with the raw amino-acid sequence, 667 residues long: Protein angel homolog 1 (667 aa).

A phosphoserine mark is found at Ser-77 and Ser-105.

The protein belongs to the CCR4/nocturin family.

This is Protein angel homolog 1 from Rattus norvegicus (Rat).